The chain runs to 300 residues: tRNA dimethylallyltransferase (300 aa).

11–18 (GPTAVGKS) is an ATP binding site. Residue 13–18 (TAVGKS) coordinates substrate. The segment at 35–38 (DSIQ) is interaction with substrate tRNA.

The protein belongs to the IPP transferase family. As to quaternary structure, monomer. Mg(2+) is required as a cofactor.

The enzyme catalyses adenosine(37) in tRNA + dimethylallyl diphosphate = N(6)-dimethylallyladenosine(37) in tRNA + diphosphate. Catalyzes the transfer of a dimethylallyl group onto the adenine at position 37 in tRNAs that read codons beginning with uridine, leading to the formation of N6-(dimethylallyl)adenosine (i(6)A). This Borrelia duttonii (strain Ly) protein is tRNA dimethylallyltransferase.